The primary structure comprises 60 residues: Large ribosomal subunit protein uL30 (60 aa).

Belongs to the universal ribosomal protein uL30 family. As to quaternary structure, part of the 50S ribosomal subunit.

In Bacillus mycoides (strain KBAB4) (Bacillus weihenstephanensis), this protein is Large ribosomal subunit protein uL30.